The chain runs to 429 residues: S-adenosylmethionine synthase (429 aa).

Glutamate 9 provides a ligand contact to Mg(2+). Histidine 15 is an ATP binding site. Residue glutamate 43 participates in K(+) binding. 2 residues coordinate L-methionine: glutamate 56 and glutamine 99. ATP-binding positions include 167-169, 235-238, aspartate 246, 252-253, alanine 269, lysine 273, and lysine 277; these read DGK, SGRF, and RK. Aspartate 246 lines the L-methionine pocket. Lysine 277 provides a ligand contact to L-methionine.

It belongs to the AdoMet synthase family. As to quaternary structure, homotetramer. It depends on Mn(2+) as a cofactor. Mg(2+) is required as a cofactor. Co(2+) serves as cofactor. Requires K(+) as cofactor.

Its subcellular location is the cytoplasm. It catalyses the reaction L-methionine + ATP + H2O = S-adenosyl-L-methionine + phosphate + diphosphate. The protein operates within amino-acid biosynthesis; S-adenosyl-L-methionine biosynthesis; S-adenosyl-L-methionine from L-methionine: step 1/1. Catalyzes the formation of S-adenosylmethionine from methionine and ATP. The reaction comprises two steps that are both catalyzed by the same enzyme: formation of S-adenosylmethionine (AdoMet) and triphosphate, and subsequent hydrolysis of the triphosphate. This Carica papaya (Papaya) protein is S-adenosylmethionine synthase (SAMS).